Here is a 350-residue protein sequence, read N- to C-terminus: tRNA pseudouridine synthase D (350 aa).

Aspartate 79 functions as the Nucleophile in the catalytic mechanism. Positions 154–306 constitute a TRUD domain; the sequence is GAPNYYGPQR…EQERRPIVLY (153 aa).

It belongs to the pseudouridine synthase TruD family.

The catalysed reaction is uridine(13) in tRNA = pseudouridine(13) in tRNA. Responsible for synthesis of pseudouridine from uracil-13 in transfer RNAs. The polypeptide is tRNA pseudouridine synthase D (Pseudoalteromonas atlantica (strain T6c / ATCC BAA-1087)).